Here is a 289-residue protein sequence, read N- to C-terminus: Bis(5'-nucleosyl)-tetraphosphatase, symmetrical (289 aa).

Belongs to the Ap4A hydrolase family.

It catalyses the reaction P(1),P(4)-bis(5'-adenosyl) tetraphosphate + H2O = 2 ADP + 2 H(+). Hydrolyzes diadenosine 5',5'''-P1,P4-tetraphosphate to yield ADP. The polypeptide is Bis(5'-nucleosyl)-tetraphosphatase, symmetrical (Yersinia pestis bv. Antiqua (strain Antiqua)).